The sequence spans 206 residues: Large ribosomal subunit protein uL22m (206 aa).

A mitochondrion-targeting transit peptide spans 1 to 40 (MAAALLRELGALWVPNLRIWTTQMLRVLPQSCIHTSTSLD).

The protein belongs to the universal ribosomal protein uL22 family. As to quaternary structure, component of the mitochondrial ribosome large subunit (39S) which comprises a 16S rRNA and about 50 distinct proteins.

It localises to the mitochondrion. The chain is Large ribosomal subunit protein uL22m (Mrpl22) from Rattus norvegicus (Rat).